The chain runs to 161 residues: Allophycocyanin beta chain (161 aa).

N4-methylasparagine is present on asparagine 71. Cysteine 81 serves as a coordination point for (2R,3E)-phycocyanobilin.

This sequence belongs to the phycobiliprotein family. As to quaternary structure, heterodimer of an alpha and a beta chain. Post-translationally, contains one covalently linked phycocyanobilin chromophore.

It is found in the cellular thylakoid membrane. Its function is as follows. Light-harvesting photosynthetic bile pigment-protein from the phycobiliprotein complex. Allophycocyanin has a maximum absorption at approximately 650 nanometers. In Thermosynechococcus vestitus (strain NIES-2133 / IAM M-273 / BP-1), this protein is Allophycocyanin beta chain (apcB).